Consider the following 168-residue polypeptide: uncharacterized protein (168 aa).

Transmembrane regions (helical) follow at residues 15-33 (YLTV…LAVL), 41-57 (LSLT…ASSL), 73-93 (WIGL…GALL), 108-128 (VPLL…WVLN), and 129-149 (NLIA…VLAI).

It localises to the cell membrane. This is an uncharacterized protein from Haemophilus influenzae (strain ATCC 51907 / DSM 11121 / KW20 / Rd).